We begin with the raw amino-acid sequence, 305 residues long: tRNA uridine(34) hydroxylase (305 aa).

Residues 125–219 (ADENTVVVDT…YLEEVPREQS (95 aa)) form the Rhodanese domain. The Cysteine persulfide intermediate role is filled by Cys-179.

It belongs to the TrhO family.

The enzyme catalyses uridine(34) in tRNA + AH2 + O2 = 5-hydroxyuridine(34) in tRNA + A + H2O. Its function is as follows. Catalyzes oxygen-dependent 5-hydroxyuridine (ho5U) modification at position 34 in tRNAs. In Brucella ovis (strain ATCC 25840 / 63/290 / NCTC 10512), this protein is tRNA uridine(34) hydroxylase.